Here is a 380-residue protein sequence, read N- to C-terminus: Tubby-like F-box protein 9 (380 aa).

The F-box domain occupies 30-76 (PFSWSELPEELLREILIRVETVDGGDWPSRRNVVACAGVCRSWRILT). The disordered stretch occupies residues 258–283 (SSRSSPVFRSHSKPLRSNSASCSDSG). Over residues 272 to 283 (LRSNSASCSDSG) the composition is skewed to polar residues.

It belongs to the TUB family. Part of a SCF (SKP1-cullin-F-box) protein ligase complex. Interacts with SKP1A/ASK1 and XERICO. In terms of tissue distribution, ubiquitous.

It functions in the pathway protein modification; protein ubiquitination. In terms of biological role, component of SCF(ASK-cullin-F-box) E3 ubiquitin ligase complexes, which may mediate the ubiquitination and subsequent proteasomal degradation of target proteins. Confers sensitivity to ABA during seed germination and early seedling development. The chain is Tubby-like F-box protein 9 from Arabidopsis thaliana (Mouse-ear cress).